A 246-amino-acid polypeptide reads, in one-letter code: 4-hydroxy-tetrahydrodipicolinate reductase (246 aa).

7–12 serves as a coordination point for NAD(+); that stretch reads GCSGRM. Arg34 provides a ligand contact to NADP(+). Residues 76 to 78 and 102 to 105 contribute to the NAD(+) site; these read ATT and CPNT. His135 acts as the Proton donor/acceptor in catalysis. Residue His136 participates in (S)-2,3,4,5-tetrahydrodipicolinate binding. Lys139 acts as the Proton donor in catalysis. A (S)-2,3,4,5-tetrahydrodipicolinate-binding site is contributed by 145–146; sequence GT.

This sequence belongs to the DapB family.

It localises to the cytoplasm. It carries out the reaction (S)-2,3,4,5-tetrahydrodipicolinate + NAD(+) + H2O = (2S,4S)-4-hydroxy-2,3,4,5-tetrahydrodipicolinate + NADH + H(+). It catalyses the reaction (S)-2,3,4,5-tetrahydrodipicolinate + NADP(+) + H2O = (2S,4S)-4-hydroxy-2,3,4,5-tetrahydrodipicolinate + NADPH + H(+). It functions in the pathway amino-acid biosynthesis; L-lysine biosynthesis via DAP pathway; (S)-tetrahydrodipicolinate from L-aspartate: step 4/4. Functionally, catalyzes the conversion of 4-hydroxy-tetrahydrodipicolinate (HTPA) to tetrahydrodipicolinate. The chain is 4-hydroxy-tetrahydrodipicolinate reductase from Chlamydia abortus (strain DSM 27085 / S26/3) (Chlamydophila abortus).